Reading from the N-terminus, the 468-residue chain is Lipase 1 (468 aa).

The signal sequence occupies residues 1 to 16 (MRGIAVFLAFISLIFA). Asparagine 79 is a glycosylation site (N-linked (GlcNAc...) asparagine). Cysteine 112 and cysteine 285 are oxidised to a cystine. Catalysis depends on serine 196, which acts as the Charge relay system. Asparagine 231 and asparagine 319 each carry an N-linked (GlcNAc...) asparagine glycan. Residues aspartate 348 and histidine 381 each act as charge relay system in the active site. A disulfide bridge links cysteine 364 with cysteine 409. 3 N-linked (GlcNAc...) asparagine glycosylation sites follow: asparagine 417, asparagine 422, and asparagine 451.

Belongs to the AB hydrolase superfamily. Lipase family. Class Lip subfamily.

It localises to the secreted. It carries out the reaction a triacylglycerol + H2O = a diacylglycerol + a fatty acid + H(+). Its function is as follows. Secreted lipase that is able to hydrolyze both the neutral triacylglycerols and the monopalmitate ester Tween 40, allowing the use of hydrolyzed products as carbon sources. Has broad lipolytic activity, which may be important for colonization and subsequent infection, therefore contributing to the persistence and virulence in human tissue. The chain is Lipase 1 from Candida albicans (strain SC5314 / ATCC MYA-2876) (Yeast).